The following is a 310-amino-acid chain: Small ribosomal subunit biogenesis GTPase RsgA (310 aa).

A CP-type G domain is found at 77 to 238; it reads LSKQSHILAA…IIDTPGIKGF (162 aa). GTP is bound by residues 126 to 129 and 180 to 188; these read NKVD and GHSGVGKST. Residues cysteine 262, cysteine 267, histidine 269, and cysteine 275 each contribute to the Zn(2+) site.

This sequence belongs to the TRAFAC class YlqF/YawG GTPase family. RsgA subfamily. Monomer. Associates with 30S ribosomal subunit, binds 16S rRNA. The cofactor is Zn(2+).

Its subcellular location is the cytoplasm. In terms of biological role, one of several proteins that assist in the late maturation steps of the functional core of the 30S ribosomal subunit. Helps release RbfA from mature subunits. May play a role in the assembly of ribosomal proteins into the subunit. Circularly permuted GTPase that catalyzes slow GTP hydrolysis, GTPase activity is stimulated by the 30S ribosomal subunit. In Bacteroides fragilis (strain YCH46), this protein is Small ribosomal subunit biogenesis GTPase RsgA.